An 88-amino-acid polypeptide reads, in one-letter code: Small ribosomal subunit protein uS17 (88 aa).

It belongs to the universal ribosomal protein uS17 family. As to quaternary structure, part of the 30S ribosomal subunit.

Its function is as follows. One of the primary rRNA binding proteins, it binds specifically to the 5'-end of 16S ribosomal RNA. This chain is Small ribosomal subunit protein uS17, found in Ruthia magnifica subsp. Calyptogena magnifica.